We begin with the raw amino-acid sequence, 160 residues long: Small ribosomal subunit protein uS7 (160 aa).

It belongs to the universal ribosomal protein uS7 family. Part of the 30S ribosomal subunit. Contacts proteins S9 and S11.

In terms of biological role, one of the primary rRNA binding proteins, it binds directly to 16S rRNA where it nucleates assembly of the head domain of the 30S subunit. Is located at the subunit interface close to the decoding center, probably blocks exit of the E-site tRNA. This Anaplasma phagocytophilum (strain HZ) protein is Small ribosomal subunit protein uS7.